The primary structure comprises 63 residues: MVHEYDKTLKVCLVRSLIGVPSRHRLSVRALGLSKVSDMRKVNDTPQVRGLINKVHYLVRIQD.

Belongs to the universal ribosomal protein uL30 family. In terms of assembly, part of the 50S ribosomal subunit.

In Xylella fastidiosa (strain M23), this protein is Large ribosomal subunit protein uL30.